The primary structure comprises 638 residues: MPIITLPDGSKKVFEKSVTILEIAQSIGAGLAKATIAGRVNDVLLDATIPINKDSKVVIITSKDKEGIEIIRHSFAHLIGHAVKQIYSDIKMAIGPVIEDGFYYDIFSEYRFTPEDLIKIENRINKLIKTNYDVEILQVSKEEAIKTFKERDETFKLRIIEEIPEEGLINLYKHEEYIDMCRGPHVPNTRHLRHFKLLKLSGSYWRGNSENESLQRIYGTAWAKEKELKDYLTRIEEAEKRDHRKLGKKHSLFHIQEESPGMIFWHPNGWTIYQVLEKYIREILKKNDYLEIKTPQAVDKSLWEKSGHWEKFRDDMFTTASENRTYAIKPMNCPCHIQVFNQGLKSYKDLPIRLAEFGSCHRNEPSGALHGLMRVRNFTQDDAHIFCTEEQIQEEVSTFIDLVFEVYKTFGFDEIIIKLSTRPEKRVGSEDIWDKSEEALTKALDNKNLKWELQPGEGAFYGPKIEFSLKDCLSRVWQCGTIQVDFSMPIRLDATYVDIDNEKRNPVMLHRAILGSFERFIGILIEQYEAKFPIWLAPYQIILLSITDRNIEKCLKFNELINNNGYRSKVDIRNEKIGYKIREATLGRVPLIAVIGDKEEEIDSVALRALNGKNLGIFNLPNLFKLMDELIEKKGRTE.

Positions 1–61 constitute a TGS domain; that stretch reads MPIITLPDGS…NKDSKVVIIT (61 aa). The interval 242–533 is catalytic; that stretch reads DHRKLGKKHS…LIEQYEAKFP (292 aa). Residues cysteine 333, histidine 384, and histidine 510 each contribute to the Zn(2+) site.

This sequence belongs to the class-II aminoacyl-tRNA synthetase family. In terms of assembly, homodimer. It depends on Zn(2+) as a cofactor.

It localises to the cytoplasm. It carries out the reaction tRNA(Thr) + L-threonine + ATP = L-threonyl-tRNA(Thr) + AMP + diphosphate + H(+). Catalyzes the attachment of threonine to tRNA(Thr) in a two-step reaction: L-threonine is first activated by ATP to form Thr-AMP and then transferred to the acceptor end of tRNA(Thr). Also edits incorrectly charged L-seryl-tRNA(Thr). The protein is Threonine--tRNA ligase of Prochlorococcus marinus (strain MIT 9301).